A 296-amino-acid chain; its full sequence is Galectin-3 (296 aa).

Over residues 1–11 (MADSFSLNDAL) the composition is skewed to polar residues. Residues 1–150 (MADSFSLNDA…PSAPGAYPAA (150 aa)) are disordered. A2 carries the post-translational modification N-acetylalanine. Phosphoserine; by CK1 is present on residues S6 and S12. Low complexity-rich tracts occupy residues 12–31 (SGSG…NQPA) and 38–47 (GASYPGAYPG). Repeat copies occupy residues 36–44 (YPGASYPGA), 45–53 (YPGQAPPGG), 54–62 (YPGQAPPGG), 63–71 (YPGQAPPGG), 72–80 (YPGQAPPGG), 81–89 (YPGQAPPGG), 90–98 (YPGQAPPGG), and 99–107 (YPGQAPPGT). The tract at residues 36 to 143 (YPGASYPGAY…AYPPPGQPSA (108 aa)) is 12 X 9 AA tandem repeats of Y-P-G-X(3)-P-G-[GAT]. Residues 48–120 (QAPPGGYPGQ…PTAPAYPGPT (73 aa)) are compositionally biased toward pro residues. Residues 108–115 (YPGPTAPA) form a 9; approximate repeat. Copy 10 of the repeat occupies 116-124 (YPGPTAPGT). A compositionally biased stretch (low complexity) spans 121–133 (APGTQPGQPSGPG). An 11; approximate repeat occupies 125-134 (QPGQPSGPGA). Residues 135–143 (YPPPGQPSA) form a 12; approximate repeat. A Galectin domain is found at 164 to 294 (YDLPLPGGVK…DIDLTSASYA (131 aa)). Residue 227–233 (WGKEERQ) participates in a beta-D-galactoside binding. The short motif at 272-287 (KNLPEISKLGISGDID) is the Nuclear export signal element.

As to quaternary structure, probably forms homo- or heterodimers. Interacts with DMBT1. Interacts with CD6 and ALCAM. Forms a complex with the ITGA3, ITGB1 and CSPG4. Interacts with LGALS3BP, LYPD3, ZFTRAF1 and UACA. Interacts with TRIM16; this interaction mediates autophagy of damage endomembranes. Interacts with cargo receptor TMED10; the interaction mediates the translocation from the cytoplasm into the ERGIC (endoplasmic reticulum-Golgi intermediate compartment) and thereby secretion. Interacts with and inhibits by binding NCR3/NKp30. Post-translationally, the degree of phosphorylation is higher in the cytoplasmic form than in the nuclear form. In protein isolated from a canine kidney cell line, 90% of the phosphate was on Ser-6 and 10% was on Ser-12.

It is found in the cytoplasm. Its subcellular location is the nucleus. It localises to the secreted. Galactose-specific lectin which binds IgE. May mediate with the alpha-3, beta-1 integrin the stimulation by CSPG4 of endothelial cells migration. Together with DMBT1, required for terminal differentiation of columnar epithelial cells during early embryogenesis. In the nucleus: acts as a pre-mRNA splicing factor. Involved in acute inflammatory responses including neutrophil activation and adhesion, chemoattraction of monocytes macrophages, opsonization of apoptotic neutrophils, and activation of mast cells. Together with TRIM16, coordinates the recognition of membrane damage with mobilization of the core autophagy regulators ATG16L1 and BECN1 in response to damaged endomembranes. When secreted, interacts with NK cell-activating receptor NCR3/NKp30 acting as an inhibitory ligand which antagonizes NK cell attack. This chain is Galectin-3 (LGALS3), found in Canis lupus familiaris (Dog).